A 224-amino-acid chain; its full sequence is Retinoschisin (224 aa).

The signal sequence occupies residues 1-23; the sequence is MSRKIEGFLLLLLFGYEATLGLS. The F5/8 type C domain maps to 63–219; it reads CPYHKPLGFE…IAIRMELLEC (157 aa). 2 cysteine pairs are disulfide-bonded: cysteine 63-cysteine 219 and cysteine 110-cysteine 142.

In terms of assembly, homooctamer of 4 homodimers; disulfide-linked. The homooctamer has a flat, cogwheel structure with a diameter of about 14 nm. Two stacked octamers can assemble to form a hexadecamer. In terms of tissue distribution, restricted to the retina (at protein level). Detected in the inner segment of the photoreceptors, the inner nuclear layer, the inner plexiform layer and the ganglion cell layer (at protein level). At the macula, expressed in both the outer and inner nuclear layers and in the inner plexiform layer (at protein level). Detected in retina. Detected only within the photoreceptor cell layer, most prominently within the inner segments of the photoreceptors. Undetectable in the inner plexiform layers and the inner nuclear layer.

It localises to the secreted. The protein localises to the cell membrane. Binds negatively charged membrane lipids, such as phosphatidylserine and phosphoinositides. May play a role in cell-cell adhesion processes in the retina, via homomeric interaction between octamers present on the surface of two neighboring cells. Required for normal structure and function of the retina. This is Retinoschisin (RS1) from Homo sapiens (Human).